A 194-amino-acid chain; its full sequence is Imidazoleglycerol-phosphate dehydratase (194 aa).

This sequence belongs to the imidazoleglycerol-phosphate dehydratase family.

It localises to the cytoplasm. The enzyme catalyses D-erythro-1-(imidazol-4-yl)glycerol 3-phosphate = 3-(imidazol-4-yl)-2-oxopropyl phosphate + H2O. The protein operates within amino-acid biosynthesis; L-histidine biosynthesis; L-histidine from 5-phospho-alpha-D-ribose 1-diphosphate: step 6/9. The polypeptide is Imidazoleglycerol-phosphate dehydratase (Caldicellulosiruptor bescii (strain ATCC BAA-1888 / DSM 6725 / KCTC 15123 / Z-1320) (Anaerocellum thermophilum)).